A 361-amino-acid polypeptide reads, in one-letter code: MGNIHIQTKSKEYDVHVGKEVLSNLTTIVQNMQPAVSNVMIISDEAVASLHLQTVIDALQVEQHVFSFVVPSGEKEKSFENFYAAHTSALENKLDRNSLILALGGGMIGDLAGFVAASFMRGIRFVQVPTTLLAHDSAVGGKVAINHPLGKNMIGAFHQPEAVVYHTPFLQSLPEKEWRSGYAEVIKHALIGDVELYHWLKEEVQTLADLHDEKLIHILTKAIPVKANVVSQDETEKGVRAHLNFGHTLGHALEKELGYGNITHGDGVAVGMLFAIFLSEQVYKVDLAYEDMKQWFLKYGYPKMPRDLNVERLVQLMKQDKKANAGAIHMVLMQEYGVVNVVSISDETVHIALEAFQKDMV.

Residues Ser-72–Lys-77, Thr-130–Thr-131, Lys-142, and Lys-151 contribute to the NAD(+) site. Residues Glu-184, His-247, and His-264 each coordinate Zn(2+).

This sequence belongs to the sugar phosphate cyclases superfamily. Dehydroquinate synthase family. The cofactor is Co(2+). Zn(2+) serves as cofactor. NAD(+) is required as a cofactor.

The protein resides in the cytoplasm. It catalyses the reaction 7-phospho-2-dehydro-3-deoxy-D-arabino-heptonate = 3-dehydroquinate + phosphate. It functions in the pathway metabolic intermediate biosynthesis; chorismate biosynthesis; chorismate from D-erythrose 4-phosphate and phosphoenolpyruvate: step 2/7. Its function is as follows. Catalyzes the conversion of 3-deoxy-D-arabino-heptulosonate 7-phosphate (DAHP) to dehydroquinate (DHQ). This chain is 3-dehydroquinate synthase, found in Bacillus cereus (strain B4264).